Consider the following 146-residue polypeptide: Small ribosomal subunit protein uS9 (146 aa).

Belongs to the universal ribosomal protein uS9 family. In terms of assembly, component of the small ribosomal subunit.

The protein resides in the cytoplasm. In terms of biological role, component of the small ribosomal subunit. The ribosome is a large ribonucleoprotein complex responsible for the synthesis of proteins in the cell. This chain is Small ribosomal subunit protein uS9 (rps16), found in Ictalurus punctatus (Channel catfish).